A 370-amino-acid polypeptide reads, in one-letter code: Muconate cycloisomerase 1 (370 aa).

K166 is a catalytic residue. Mn(2+) is bound by residues D195, E221, and D246.

Belongs to the mandelate racemase/muconate lactonizing enzyme family. Homooctamer. Requires Mn(2+) as cofactor.

It carries out the reaction (S)-muconolactone = cis,cis-muconate + H(+). It functions in the pathway aromatic compound metabolism; beta-ketoadipate pathway; 5-oxo-4,5-dihydro-2-furylacetate from catechol: step 2/3. Catalyzes a syn cycloisomerization. The chain is Muconate cycloisomerase 1 (catB) from Acinetobacter baylyi (strain ATCC 33305 / BD413 / ADP1).